Consider the following 156-residue polypeptide: MDVGVGGKAAKKAVGRKLGGPKKKPVSRSVKAGLQFPVGRIGRYLKKGRYAQRVGTGAPVYLAAVLEYLAAEVLELAGNAARDNKKNRIIPRHVLLAIRNDEELGKLLAGVTIAHGGVLPNINPVLLPKKTAEKADKPAKASKDKAAKSPKKQARS.

2 disordered regions span residues 1–26 (MDVGVGGKAAKKAVGRKLGGPKKKPV) and 129–156 (KKTAEKADKPAKASKDKAAKSPKKQARS). A compositionally biased stretch (basic residues) spans 9–26 (AAKKAVGRKLGGPKKKPV). A compositionally biased stretch (basic and acidic residues) spans 130–147 (KTAEKADKPAKASKDKAA). The SPKK motif signature appears at 149-152 (SPKK).

Belongs to the histone H2A family. As to quaternary structure, the nucleosome is a histone octamer containing two molecules each of H2A, H2B, H3 and H4 assembled in one H3-H4 heterotetramer and two H2A-H2B heterodimers. The octamer wraps approximately 147 bp of DNA.

It is found in the nucleus. The protein localises to the chromosome. Core component of nucleosome. Nucleosomes wrap and compact DNA into chromatin, limiting DNA accessibility to the cellular machineries which require DNA as a template. Histones thereby play a central role in transcription regulation, DNA repair, DNA replication and chromosomal stability. DNA accessibility is regulated via a complex set of post-translational modifications of histones, also called histone code, and nucleosome remodeling. The polypeptide is Probable histone H2A.6 (Oryza sativa subsp. indica (Rice)).